An 826-amino-acid polypeptide reads, in one-letter code: Breast cancer anti-estrogen resistance protein 3 homolog (826 aa).

At Ala2 the chain carries N-acetylalanine. Residues Ser32, Ser78, Ser83, and Ser182 each carry the phosphoserine modification. A disordered region spans residues 46 to 81 (SIHGTLPRKKKGPPPIRSCDNFSHVGTLPHSRSPRH). The region spanning 154-253 (WYHGRIPRQV…QSGAIIFQPV (100 aa)) is the SH2 domain. Residues 268 to 287 (ASSPDRAHEGSLTEGRPDAA) form a disordered region. A Phosphoserine modification is found at Ser291. Residues 294 to 321 (VGGTQAREQGLPRGNLLRNKEKSGSQPA) are disordered. Lys335 carries the post-translational modification N6-methyllysine. A disordered region spans residues 348–406 (KLTPQSPSVGTSPCPNSPVFRTGSEPTLSPAVVRRVSSDARPGEALRGSDSQLCPKPPP). Positions 350 to 361 (TPQSPSVGTSPC) are enriched in polar residues. A phosphoserine mark is found at Ser359, Ser364, Ser376, and Ser472. Residues 480–501 (DDDDRTRPWKPPPAPGDTVGED) are disordered. Residues 549 to 819 (DPKVIAQHLL…TALSRKLEPP (271 aa)) form the Ras-GEF domain. The tract at residues 745 to 749 (LATAR) is mediates the interaction with BCAR1/p130CAS.

Part of a complex comprised of PTPRA, BCAR1, BCAR3 (via SH2 domain) and SRC; the formation of the complex is dependent on integrin mediated-tyrosine phosphorylation of PTPRA. Within the complex, interacts (via SH2 domain) with PTPRA (when phosphorylated on 'Tyr-797'). Interacts (via Ras-GEF domain) with BCAR1. Interacts (via Ras-GEF domain) with NEDD9. Interacts with PTK2/FAK1. Interacts with PTPN1. Interacts (via SH2 domain) with EGFR (when tyrosine-phosphorylated). Phosphorylated on tyrosine residues.

The protein resides in the cytoplasm. Its subcellular location is the cell junction. It localises to the focal adhesion. Its function is as follows. Acts as an adapter protein downstream of several growth factor receptors to promote cell proliferation, migration, and redistribution of actin fibers. Specifically involved in INS/insulin signaling pathway by mediating MAPK1/ERK2-MAPK3/ERK1 activation and DNA synthesis. Promotes insulin-mediated membrane ruffling. In response to vasoconstrictor peptide EDN1, involved in the activation of RAP1 downstream of PTK2B via interaction with phosphorylated BCAR1. Inhibits cell migration and invasion via regulation of TGFB-mediated matrix digestion, actin filament rearrangement, and inhibition of invadopodia activity. May inhibit TGFB-SMAD signaling, via facilitating BCAR1 and SMAD2 and/or SMAD3 interaction. Regulates EGF-induced DNA synthesis. Required for the maintenance of ocular lens morphology and structural integrity, potentially via regulation of focal adhesion complex signaling. Acts upstream of PTPRA to regulate the localization of BCAR1 and PTPRA to focal adhesions, via regulation of SRC-mediated phosphorylation of PTPRA. Positively regulates integrin-induced tyrosine phosphorylation of BCAR1. Acts as a guanine nucleotide exchange factor (GEF) for small GTPases RALA, RAP1A and RRAS. However, in a contrasting study, lacks GEF activity towards RAP1. The protein is Breast cancer anti-estrogen resistance protein 3 homolog (BCAR3) of Bos taurus (Bovine).